The primary structure comprises 707 residues: Bone morphogenetic protein 1 (707 aa).

Positions serine 57–glutamate 90 are disordered. A glycan (N-linked (GlcNAc...) asparagine) is linked at asparagine 62. Positions lysine 68–glutamate 81 are enriched in basic residues. The region spanning alanine 84 to proline 283 is the Peptidase M12A domain. N-linked (GlcNAc...) asparagine glycosylation occurs at asparagine 105. 4 cysteine pairs are disulfide-bonded: cysteine 126–cysteine 282, cysteine 146–cysteine 168, cysteine 148–cysteine 149, and cysteine 285–cysteine 311. Histidine 176 contributes to the Zn(2+) binding site. Glutamate 177 is a catalytic residue. Zn(2+)-binding residues include histidine 180 and histidine 186. CUB domains lie at cysteine 285–leucine 397 and cysteine 398–lysine 509. 2 N-linked (GlcNAc...) asparagine glycosylation sites follow: asparagine 295 and asparagine 326. Cystine bridges form between cysteine 338–cysteine 360, cysteine 398–cysteine 424, cysteine 451–cysteine 473, cysteine 514–cysteine 526, cysteine 522–cysteine 535, cysteine 537–cysteine 550, cysteine 554–cysteine 580, and cysteine 607–cysteine 629. In terms of domain architecture, EGF-like; calcium-binding spans glutamate 510 to glutamate 551. Residues cysteine 554–glutamate 666 enclose the CUB 3 domain. N-linked (GlcNAc...) asparagine glycosylation occurs at asparagine 562. Residues arginine 682–proline 707 are disordered. Basic residues predominate over residues lysine 690–proline 707.

In terms of assembly, interacts with olfml3/ont1. The cofactor is Zn(2+). Post-translationally, proteolytically activated in the trans-Golgi network by furin-like/paired basic proprotein convertases, cleavage is not required for secretion.

The protein localises to the golgi apparatus. Its subcellular location is the trans-Golgi network. The protein resides in the secreted. It is found in the extracellular space. It localises to the extracellular matrix. Functionally, metalloprotease involved in pattern formation in gastrula and later differentiation of developing organs. Able to cleave chordin (chrd), suggesting that it may act in dorsoventral patterning during early development by regulating the chordin (chrd) activity. This chain is Bone morphogenetic protein 1 (bmp1), found in Xenopus laevis (African clawed frog).